We begin with the raw amino-acid sequence, 205 residues long: FMN reductase (NADH) RutF (205 aa).

Residues 171–205 are disordered; it reads PRAPRSGSAPAEPARAARALGARPAEGPALALRSA.

Belongs to the non-flavoprotein flavin reductase family. RutF subfamily.

It catalyses the reaction FMNH2 + NAD(+) = FMN + NADH + 2 H(+). Its function is as follows. Catalyzes the reduction of FMN to FMNH2 which is used to reduce pyrimidine by RutA via the Rut pathway. This Methylorubrum extorquens (strain DSM 6343 / CIP 106787 / DM4) (Methylobacterium extorquens) protein is FMN reductase (NADH) RutF.